Reading from the N-terminus, the 241-residue chain is Zinc finger CCHC domain-containing protein 24 (241 aa).

2 positions are modified to phosphoserine: serine 65 and serine 93. The CCHC-type zinc finger occupies 132-149 (YLCHLCFNKGHYIKDCPQ).

This Macaca fascicularis (Crab-eating macaque) protein is Zinc finger CCHC domain-containing protein 24 (ZCCHC24).